A 605-amino-acid chain; its full sequence is Zinc metalloproteinase-disintegrin-like BfMP (605 aa).

The signal sequence occupies residues 1 to 11; that stretch reads MLVVFPYQGSS. The propeptide occupies 12–179; the sequence is IILESGNVND…WESDEPFKNT (168 aa). 2 N-linked (GlcNAc...) asparagine glycosylation sites follow: Asn-178 and Asn-215. The Peptidase M12B domain maps to 196-392; that stretch reads KYIEFYVAVD…DRPQCILNKP (197 aa). Intrachain disulfides connect Cys-307–Cys-387, Cys-347–Cys-371, Cys-350–Cys-355, Cys-403–Cys-432, Cys-414–Cys-427, Cys-416–Cys-422, Cys-426–Cys-449, Cys-440–Cys-446, Cys-445–Cys-471, Cys-458–Cys-478, Cys-465–Cys-497, Cys-490–Cys-502, Cys-509–Cys-559, Cys-524–Cys-567, Cys-537–Cys-547, Cys-554–Cys-593, and Cys-587–Cys-598. Position 332 (His-332) interacts with Zn(2+). The active site involves Glu-333. Zn(2+) is bound by residues His-336 and His-342. The Disintegrin domain occupies 400-486; that stretch reads PAICGNYFVE…ECPTDIFRRN (87 aa). The D/ECD-tripeptide signature appears at 464–466; sequence DCD.

This sequence belongs to the venom metalloproteinase (M12B) family. P-III subfamily. P-IIIa sub-subfamily. Monomer. Zn(2+) serves as cofactor. As to expression, expressed by the venom gland.

It localises to the secreted. Snake venom zinc metalloproteinase that inhibits platelet aggregation and degrades fibrinogen. In Bungarus fasciatus (Banded krait), this protein is Zinc metalloproteinase-disintegrin-like BfMP.